Here is a 462-residue protein sequence, read N- to C-terminus: UDP-N-acetylmuramoylalanine--D-glutamate ligase (462 aa).

Residue 117 to 123 (GTNGKTT) participates in ATP binding.

This sequence belongs to the MurCDEF family.

It localises to the cytoplasm. It carries out the reaction UDP-N-acetyl-alpha-D-muramoyl-L-alanine + D-glutamate + ATP = UDP-N-acetyl-alpha-D-muramoyl-L-alanyl-D-glutamate + ADP + phosphate + H(+). Its pathway is cell wall biogenesis; peptidoglycan biosynthesis. Its function is as follows. Cell wall formation. Catalyzes the addition of glutamate to the nucleotide precursor UDP-N-acetylmuramoyl-L-alanine (UMA). This chain is UDP-N-acetylmuramoylalanine--D-glutamate ligase, found in Parasynechococcus marenigrum (strain WH8102).